Reading from the N-terminus, the 528-residue chain is DEAD-box ATP-dependent RNA helicase CshA (528 aa).

The short motif at 2 to 30 is the Q motif element; the sequence is TTFRELGLSDSLLQSVESMGFEEATPIQA. A Helicase ATP-binding domain is found at 33–203; the sequence is IPHALQGKDI…ERFMTEPQHI (171 aa). 46 to 53 serves as a coordination point for ATP; that stretch reads AQTGTGKT. A DEAD box motif is present at residues 151-154; that stretch reads DEAD. Residues 214–374 enclose the Helicase C-terminal domain; that stretch reads NIQQFYLEVQ…RMDAPTLDEA (161 aa). Positions 428–528 are disordered; sequence TTPIALTSEP…RKHHSRKPQA (101 aa). Residues 458–506 are compositionally biased toward basic and acidic residues; that stretch reads DGNRNRSRDGRGGDGRNRDRNRDGRNRDGNRDRNREGSRDGNRGRRGEG. A compositionally biased stretch (basic residues) spans 518–528; that stretch reads ERKHHSRKPQA.

This sequence belongs to the DEAD box helicase family. CshA subfamily. In terms of assembly, oligomerizes, may be a member of the RNA degradosome.

It is found in the cytoplasm. The catalysed reaction is ATP + H2O = ADP + phosphate + H(+). Its function is as follows. DEAD-box RNA helicase possibly involved in RNA degradation. Unwinds dsRNA in both 5'- and 3'-directions, has RNA-dependent ATPase activity. In Bacillus thuringiensis (strain Al Hakam), this protein is DEAD-box ATP-dependent RNA helicase CshA.